The sequence spans 109 residues: Large ribosomal subunit protein uL22 (109 aa).

It belongs to the universal ribosomal protein uL22 family. Part of the 50S ribosomal subunit.

This protein binds specifically to 23S rRNA; its binding is stimulated by other ribosomal proteins, e.g. L4, L17, and L20. It is important during the early stages of 50S assembly. It makes multiple contacts with different domains of the 23S rRNA in the assembled 50S subunit and ribosome. Its function is as follows. The globular domain of the protein is located near the polypeptide exit tunnel on the outside of the subunit, while an extended beta-hairpin is found that lines the wall of the exit tunnel in the center of the 70S ribosome. This is Large ribosomal subunit protein uL22 from Polaromonas naphthalenivorans (strain CJ2).